Reading from the N-terminus, the 382-residue chain is Dual-specificity RNA methyltransferase RlmN (382 aa).

Glutamate 95 (proton acceptor) is an active-site residue. Residues 101–348 (EDDRGTLCIS…TTVRKTRGDD (248 aa)) form the Radical SAM core domain. The cysteines at positions 108 and 353 are disulfide-linked. [4Fe-4S] cluster is bound by residues cysteine 115, cysteine 119, and cysteine 122. S-adenosyl-L-methionine-binding positions include 179-180 (GE), serine 211, 233-235 (SLH), and asparagine 310. The S-methylcysteine intermediate role is filled by cysteine 353.

The protein belongs to the radical SAM superfamily. RlmN family. Requires [4Fe-4S] cluster as cofactor.

It localises to the cytoplasm. It catalyses the reaction adenosine(2503) in 23S rRNA + 2 reduced [2Fe-2S]-[ferredoxin] + 2 S-adenosyl-L-methionine = 2-methyladenosine(2503) in 23S rRNA + 5'-deoxyadenosine + L-methionine + 2 oxidized [2Fe-2S]-[ferredoxin] + S-adenosyl-L-homocysteine. The catalysed reaction is adenosine(37) in tRNA + 2 reduced [2Fe-2S]-[ferredoxin] + 2 S-adenosyl-L-methionine = 2-methyladenosine(37) in tRNA + 5'-deoxyadenosine + L-methionine + 2 oxidized [2Fe-2S]-[ferredoxin] + S-adenosyl-L-homocysteine. Its function is as follows. Specifically methylates position 2 of adenine 2503 in 23S rRNA and position 2 of adenine 37 in tRNAs. m2A2503 modification seems to play a crucial role in the proofreading step occurring at the peptidyl transferase center and thus would serve to optimize ribosomal fidelity. This chain is Dual-specificity RNA methyltransferase RlmN, found in Bordetella pertussis (strain Tohama I / ATCC BAA-589 / NCTC 13251).